The primary structure comprises 818 residues: Serine/threonine-protein phosphatase 4 regulatory subunit 3 (818 aa).

Residues 1–100 (MTDTRRRVKV…DEIWEKICQV (100 aa)) form the WH1 domain. A compositionally biased stretch (acidic residues) spans 670–681 (FNTDEEDLEDGE). The tract at residues 670-818 (FNTDEEDLED…PLSKKSKLSS (149 aa)) is disordered. The segment covering 703–718 (FMERKKLKDSEEKEVL) has biased composition (basic and acidic residues). Residues 729–775 (SPSFKLSFSSSPKASLSSPPTASLHPGSPGSPSSPGTGARSSPPSAA) show a composition bias toward low complexity. Phosphoserine occurs at positions 769 and 770. Positions 788-803 (YPDDDEEDEDEEDADS) are enriched in acidic residues.

The protein belongs to the SMEK family. As to quaternary structure, serine/threonine-protein phosphatase 4 (PP4) occurs in different assemblies of the catalytic and one or more regulatory subunits.

In terms of biological role, regulatory subunit of serine/threonine-protein phosphatase 4. The polypeptide is Serine/threonine-protein phosphatase 4 regulatory subunit 3 (smek1) (Danio rerio (Zebrafish)).